A 162-amino-acid chain; its full sequence is N5-carboxyaminoimidazole ribonucleotide mutase (162 aa).

Substrate-binding residues include serine 11, aspartate 14, and arginine 41.

Belongs to the AIR carboxylase family. Class I subfamily.

It carries out the reaction 5-carboxyamino-1-(5-phospho-D-ribosyl)imidazole + H(+) = 5-amino-1-(5-phospho-D-ribosyl)imidazole-4-carboxylate. It participates in purine metabolism; IMP biosynthesis via de novo pathway; 5-amino-1-(5-phospho-D-ribosyl)imidazole-4-carboxylate from 5-amino-1-(5-phospho-D-ribosyl)imidazole (N5-CAIR route): step 2/2. Catalyzes the conversion of N5-carboxyaminoimidazole ribonucleotide (N5-CAIR) to 4-carboxy-5-aminoimidazole ribonucleotide (CAIR). In Brucella melitensis biotype 1 (strain ATCC 23456 / CCUG 17765 / NCTC 10094 / 16M), this protein is N5-carboxyaminoimidazole ribonucleotide mutase.